The primary structure comprises 496 residues: Membrane-bound lytic murein transglycosylase F (496 aa).

The N-terminal stretch at Met-1–Glu-29 is a signal peptide. The non-LT domain stretch occupies residues Lys-30 to Val-267. Residues Asp-268–Leu-496 are LT domain. Glu-314 is a catalytic residue. Residues Val-464 to Leu-496 form a disordered region. A compositionally biased stretch (low complexity) spans Ala-486 to Leu-496.

This sequence in the N-terminal section; belongs to the bacterial solute-binding protein 3 family. In the C-terminal section; belongs to the transglycosylase Slt family.

Its subcellular location is the cell outer membrane. The catalysed reaction is Exolytic cleavage of the (1-&gt;4)-beta-glycosidic linkage between N-acetylmuramic acid (MurNAc) and N-acetylglucosamine (GlcNAc) residues in peptidoglycan, from either the reducing or the non-reducing ends of the peptidoglycan chains, with concomitant formation of a 1,6-anhydrobond in the MurNAc residue.. Its function is as follows. Murein-degrading enzyme that degrades murein glycan strands and insoluble, high-molecular weight murein sacculi, with the concomitant formation of a 1,6-anhydromuramoyl product. Lytic transglycosylases (LTs) play an integral role in the metabolism of the peptidoglycan (PG) sacculus. Their lytic action creates space within the PG sacculus to allow for its expansion as well as for the insertion of various structures such as secretion systems and flagella. The sequence is that of Membrane-bound lytic murein transglycosylase F from Pseudomonas savastanoi pv. phaseolicola (strain 1448A / Race 6) (Pseudomonas syringae pv. phaseolicola (strain 1448A / Race 6)).